We begin with the raw amino-acid sequence, 515 residues long: tRNA pseudouridine synthase Pus10 (515 aa).

Residues cysteine 21 and cysteine 24 each coordinate Zn(2+). A coiled-coil region spans residues 42–85; it reads KEVTYELQKYLSHGDPAEENDTPPSKKAKIEEDTSSNEHLGNCE. A disordered region spans residues 55-82; sequence GDPAEENDTPPSKKAKIEEDTSSNEHLG. Zn(2+) contacts are provided by cysteine 96 and cysteine 99. Positions 291–304 are RNA binding forefinger loop; that stretch reads TPWIIDGERKIESS. The Nucleophile role is filled by aspartate 331. The tract at residues 428–443 is RNA binding thumb loop; sequence QKTPLRVLHRRPLASR.

This sequence belongs to the pseudouridine synthase Pus10 family.

It localises to the nucleus. The protein resides in the cytoplasm. The protein localises to the mitochondrion. It catalyses the reaction uridine(55) in tRNA = pseudouridine(55) in tRNA. It carries out the reaction uridine(54) in tRNA = pseudouridine(54) in tRNA. Its function is as follows. Protein with different functions depending on its subcellular location: involved in miRNA processing in the nucleus and acts as a tRNA pseudouridylate synthase in the cytoplasm. In the cytoplasm, acts as a pseudouridylate synthase by catalyzing synthesis of pseudouridine(54) and pseudouridine(55) from uracil-54 and uracil-55, respectively, in the psi GC loop of a subset of tRNAs. tRNA pseudouridylate synthase activity is enhanced by the presence of 1-methyladenosine at position 53-61 of tRNAs. Does not show tRNA pseudouridylate synthase activity in the nucleus. In the nucleus, promotes primary microRNAs (pri-miRNAs) processing independently of its RNA pseudouridylate synthase activity. Binds pri-miRNAs. The chain is tRNA pseudouridine synthase Pus10 from Xenopus laevis (African clawed frog).